A 487-amino-acid chain; its full sequence is MTSPHFAWLPPEINSALMFAGPGSGPLIAAATAWGELAEELLASIASLGSVTSELTSGAWLGPSAAAMMAVATQYLAWLSTAAAQAEQAAAQAMAIATAFEAALAATVQPAVVAANRGLMQLLAATNWFGQNAPALMDVEAAYEQMWALDVAAMAGYHFDASAAVAQLAPWQQVLRNLGIDIGKNGQINLGFGNTGSGNIGNNNIGNNNIGSGNTGTGNIGSGNTGSGNLGLGNLGDGNIGFGNTGSGNIGFGITGDHQMGFGGFNSGSGNIGFGNSGTGNVGLFNSGSGNIGIGNSGSLNSGIGTSGTINAGLGSAGSLNTSFWNAGMQNAALGSAAGSEAALVSSAGYATGGMSTAALSSGILASALGSTGGLQHGLANVLNSGLTNTPVAAPASAPVGGLDSGNPNPGSGSAAAGSGANPGLRSPGTSYPSFVNSGSNDSGLRNTAVREPSTPGSGIPKSNFYPSPDRESAYASPRIGQPVGSE.

The segment covering 398–424 (APVGGLDSGNPNPGSGSAAAGSGANPG) has biased composition (low complexity). Positions 398 to 487 (APVGGLDSGN…PRIGQPVGSE (90 aa)) are disordered. Residues 428–446 (PGTSYPSFVNSGSNDSGLR) are compositionally biased toward polar residues.

Belongs to the mycobacterial PPE family.

It is found in the secreted. Plays a major role in the integrity and stability of the capsule. This is PPE family protein PPE10 (PPE10) from Mycobacterium tuberculosis (strain CDC 1551 / Oshkosh).